Reading from the N-terminus, the 394-residue chain is MVVFSKTAALVLGLSSAVSAAPAPTRKGFTINQIARPANKTRTINLPGMYARSLAKFGGTVPQSVKEAASKGSAVTTPQNNDEEYLTPVTVGKSTLHLDFDTGSADLWVFSDELPSSEQTGHDLYTPSSSATKLSGYTWDISYGDGSSASGDVYRDTVTVGGVTTNKQAVEAASKISSEFVQNTANDGLLGLAFSSINTVQPKAQTTFFDTVKSQLDSPLFAVQLKHDAPGVYDFGYIDDSKYTGSITYTDADSSQGYWGFSTDGYSIGDGSSSSSGFSAIADTGTTLILLDDEIVSAYYEQVSGAQESEEAGGYVFSCSTNPPDFTVVIGDYKAVVPGKYINYAPISTGSSTCFGGIQSNSGLGLSILGDVFLKSQYVVFNSEGPKLGFAAQA.

The signal sequence occupies residues 1-20; it reads MVVFSKTAALVLGLSSAVSA. A propeptide spans 21-69 (activation peptide); that stretch reads APAPTRKGFTINQIARPANKTRTINLPGMYARSLAKFGGTVPQSVKEAA. The region spanning 85–391 is the Peptidase A1 domain; sequence YLTPVTVGKS…NSEGPKLGFA (307 aa). Catalysis depends on residues Asp101 and Asp283. Cys319 and Cys354 form a disulfide bridge.

Belongs to the peptidase A1 family. In terms of assembly, monomer.

It localises to the secreted. It catalyses the reaction Hydrolysis of proteins with broad specificity. Generally favors hydrophobic residues in P1 and P1', but also accepts Lys in P1, which leads to activation of trypsinogen. Does not clot milk.. Secreted aspartic endopeptidase that allows assimilation of proteinaceous substrates. The scissile peptide bond is attacked by a nucleophilic water molecule activated by two aspartic residues in the active site. Shows a broad primary substrate specificity. Favors hydrophobic residues at the P1 and P1' positions, but also accepts a lysine residue in the P1 position, leading to the activation of trypsinogen and chymotrypsinogen A. The sequence is that of Aspergillopepsin-1 (pepA) from Aspergillus niger (strain ATCC MYA-4892 / CBS 513.88 / FGSC A1513).